Reading from the N-terminus, the 526-residue chain is Adenylosuccinate synthetase (526 aa).

Residues 102-108 and 130-132 each bind GTP; these read GDEGKGK and GHT. Aspartate 103 serves as the catalytic Proton acceptor. Mg(2+) contacts are provided by aspartate 103 and glycine 130. IMP is bound by residues 103 to 106, 128 to 131, threonine 219, arginine 233, asparagine 310, threonine 325, and arginine 392; these read DEGK and NAGH. Histidine 131 functions as the Proton donor in the catalytic mechanism. 388–394 contacts substrate; it reads TTTGRTR. Residues arginine 394, 420-422, and 502-504 each bind GTP; these read KVD and GVG.

The protein belongs to the adenylosuccinate synthetase family. In terms of assembly, homodimer. Requires Mg(2+) as cofactor.

Its subcellular location is the cytoplasm. The enzyme catalyses IMP + L-aspartate + GTP = N(6)-(1,2-dicarboxyethyl)-AMP + GDP + phosphate + 2 H(+). It participates in purine metabolism; AMP biosynthesis via de novo pathway; AMP from IMP: step 1/2. Plays an important role in the de novo pathway and in the salvage pathway of purine nucleotide biosynthesis. Catalyzes the first committed step in the biosynthesis of AMP from IMP. The polypeptide is Adenylosuccinate synthetase (Phaeodactylum tricornutum (strain CCAP 1055/1)).